The chain runs to 1072 residues: DNA-directed RNA polymerase subunit beta (1072 aa).

The protein belongs to the RNA polymerase beta chain family. As to quaternary structure, in plastids the minimal PEP RNA polymerase catalytic core is composed of four subunits: alpha, beta, beta', and beta''. When a (nuclear-encoded) sigma factor is associated with the core the holoenzyme is formed, which can initiate transcription.

Its subcellular location is the plastid. It is found in the chloroplast. It carries out the reaction RNA(n) + a ribonucleoside 5'-triphosphate = RNA(n+1) + diphosphate. Its function is as follows. DNA-dependent RNA polymerase catalyzes the transcription of DNA into RNA using the four ribonucleoside triphosphates as substrates. The sequence is that of DNA-directed RNA polymerase subunit beta from Oenothera elata subsp. hookeri (Hooker's evening primrose).